The following is a 215-amino-acid chain: UPF0441 protein SG0265 (215 aa).

It belongs to the UPF0441 family.

The sequence is that of UPF0441 protein SG0265 from Sodalis glossinidius (strain morsitans).